Consider the following 433-residue polypeptide: Enolase (433 aa).

Gln167 lines the (2R)-2-phosphoglycerate pocket. Glu209 acts as the Proton donor in catalysis. Residues Asp246, Glu291, and Asp318 each coordinate Mg(2+). Residues Lys343, Arg372, Ser373, and Lys394 each contribute to the (2R)-2-phosphoglycerate site. Lys343 functions as the Proton acceptor in the catalytic mechanism.

This sequence belongs to the enolase family. As to quaternary structure, component of the RNA degradosome, a multiprotein complex involved in RNA processing and mRNA degradation. It depends on Mg(2+) as a cofactor.

It is found in the cytoplasm. The protein localises to the secreted. Its subcellular location is the cell surface. The enzyme catalyses (2R)-2-phosphoglycerate = phosphoenolpyruvate + H2O. Its pathway is carbohydrate degradation; glycolysis; pyruvate from D-glyceraldehyde 3-phosphate: step 4/5. Functionally, catalyzes the reversible conversion of 2-phosphoglycerate (2-PG) into phosphoenolpyruvate (PEP). It is essential for the degradation of carbohydrates via glycolysis. In Vibrio vulnificus (strain YJ016), this protein is Enolase.